Here is an 848-residue protein sequence, read N- to C-terminus: MSLVSTVNDAERTDLLNSSGNRNGPVVETVTTTAVEEKPITTKSVRGFSVYHKGGGAQLSKEALYRAKVKYGIYQSPARSFSTGVAEPKVASDVAANLANDNKTTIEAYKRLFVDPNANTAARRSIVNGGPRVEDVVIPESHYGSHQAATRAYSVASVATDENARRLQSPQSPPATRAHSLKSANKAFYNTKLPEQVEVVPKQVGKKPMDMSKILSSAENRAQHRVTDRWDPVKADHGIRTSTQNLNRVRSTSLTGPIYKERKGVKEPSSKDASATQGDRGNYAQWAAFAVRDMDPTALTNKEFEERERAKRELLSQITSQQVLAKARENADKQLDAIDANDVHRVLFGNDAYNRAAIEIAQRNAQRQAGETDVNEGKINIGGGLWLSPDDVHTIAREMVDPVLGEVHQRADDQRATDVDIKERNDYVTNEWNAWTAMHQTKENNNEALLVNSQNKRTREADSARSEAEKSFTELCDRMDKQVAERNDLLNQTKQAREQLERETEEKLAQNKEDNKTALRDLKGQHAKELEEAREEQRRLVQPYEERLEEVNREHESLVQERTAINEEIARLHESIKEHQYQISKYEREIKSHEEQNASAEEELKKLETDREGIQSHYNDNVVVNANKAKEQALLSSEEARLQNLKVDAIINERKTELNRTEQELQREKLNMLEAMRKTAEARGDENIDEERVKQLIGMTSTEYVEEQKKLQKAAGKAEKPKASTADKGQALDKALAHDQGDQEANTKDFKEGAETKAKESKGKPSQSVAKAIATSPTKTEAKAEPSTSKGKSNGVGTHPDNASGISQISDTLENGKHLSEEDLKELAEDAEQRVSGEPQPSYFKEVF.

4 disordered regions span residues 1–26, 218–279, 496–520, and 712–848; these read MSLV…NGPV, AENR…TQGD, AREQ…TALR, and QKAA…KEVF. Basic and acidic residues predominate over residues 221 to 239; that stretch reads RAQHRVTDRWDPVKADHGI. Over residues 240–255 the composition is skewed to polar residues; that stretch reads RTSTQNLNRVRSTSLT. Over residues 259-270 the composition is skewed to basic and acidic residues; it reads YKERKGVKEPSS. 2 stretches are compositionally biased toward basic and acidic residues: residues 712–722 and 735–763; these read QKAAGKAEKPK and ALAH…ESKG. 3 stretches are compositionally biased toward polar residues: residues 764 to 779, 786 to 796, and 804 to 813; these read KPSQ…SPTK, PSTSKGKSNGV, and SGISQISDTL. Positions 814-835 are enriched in basic and acidic residues; it reads ENGKHLSEEDLKELAEDAEQRV.

It belongs to the EIS1 family.

The protein localises to the cytoplasmic granule. It is found in the cell membrane. Functionally, required for normal formation of eisosomes, large cytoplasmic protein assemblies that localize to specialized domains on plasma membrane and mark the site of endocytosis. This is Eisosome protein 1 (EIS1) from Zygosaccharomyces rouxii (strain ATCC 2623 / CBS 732 / NBRC 1130 / NCYC 568 / NRRL Y-229).